The sequence spans 255 residues: Thiazole synthase (255 aa).

Lys96 functions as the Schiff-base intermediate with DXP in the catalytic mechanism. 1-deoxy-D-xylulose 5-phosphate-binding positions include Gly157, 183-184 (AG), and 205-206 (NT).

This sequence belongs to the ThiG family. As to quaternary structure, homotetramer. Forms heterodimers with either ThiH or ThiS.

It localises to the cytoplasm. It carries out the reaction [ThiS sulfur-carrier protein]-C-terminal-Gly-aminoethanethioate + 2-iminoacetate + 1-deoxy-D-xylulose 5-phosphate = [ThiS sulfur-carrier protein]-C-terminal Gly-Gly + 2-[(2R,5Z)-2-carboxy-4-methylthiazol-5(2H)-ylidene]ethyl phosphate + 2 H2O + H(+). It functions in the pathway cofactor biosynthesis; thiamine diphosphate biosynthesis. In terms of biological role, catalyzes the rearrangement of 1-deoxy-D-xylulose 5-phosphate (DXP) to produce the thiazole phosphate moiety of thiamine. Sulfur is provided by the thiocarboxylate moiety of the carrier protein ThiS. In vitro, sulfur can be provided by H(2)S. The chain is Thiazole synthase from Staphylococcus epidermidis (strain ATCC 35984 / DSM 28319 / BCRC 17069 / CCUG 31568 / BM 3577 / RP62A).